The following is a 122-amino-acid chain: Large ribosomal subunit protein uL14 (122 aa).

The protein belongs to the universal ribosomal protein uL14 family. Part of the 50S ribosomal subunit. Forms a cluster with proteins L3 and L19. In the 70S ribosome, L14 and L19 interact and together make contacts with the 16S rRNA in bridges B5 and B8.

Binds to 23S rRNA. Forms part of two intersubunit bridges in the 70S ribosome. This is Large ribosomal subunit protein uL14 from Campylobacter hominis (strain ATCC BAA-381 / DSM 21671 / CCUG 45161 / LMG 19568 / NCTC 13146 / CH001A).